The chain runs to 437 residues: Enolase (437 aa).

Glutamine 162 contributes to the (2R)-2-phosphoglycerate binding site. The active-site Proton donor is the glutamate 204. Residues aspartate 251, glutamate 297, and aspartate 324 each contribute to the Mg(2+) site. 4 residues coordinate (2R)-2-phosphoglycerate: lysine 349, arginine 378, serine 379, and lysine 400. The active-site Proton acceptor is the lysine 349.

It belongs to the enolase family. Mg(2+) serves as cofactor.

It is found in the cytoplasm. Its subcellular location is the secreted. The protein resides in the cell surface. It carries out the reaction (2R)-2-phosphoglycerate = phosphoenolpyruvate + H2O. It participates in carbohydrate degradation; glycolysis; pyruvate from D-glyceraldehyde 3-phosphate: step 4/5. In terms of biological role, catalyzes the reversible conversion of 2-phosphoglycerate (2-PG) into phosphoenolpyruvate (PEP). It is essential for the degradation of carbohydrates via glycolysis. This chain is Enolase, found in Chlorobium limicola (strain DSM 245 / NBRC 103803 / 6330).